Reading from the N-terminus, the 234-residue chain is Ribose-5-phosphate isomerase A (234 aa).

Residues T39 to T42, D92 to D95, and K105 to G108 each bind substrate. E114 serves as the catalytic Proton acceptor. K132 provides a ligand contact to substrate.

The protein belongs to the ribose 5-phosphate isomerase family. In terms of assembly, homodimer.

It catalyses the reaction aldehydo-D-ribose 5-phosphate = D-ribulose 5-phosphate. Its pathway is carbohydrate degradation; pentose phosphate pathway; D-ribose 5-phosphate from D-ribulose 5-phosphate (non-oxidative stage): step 1/1. In terms of biological role, catalyzes the reversible conversion of ribose-5-phosphate to ribulose 5-phosphate. The chain is Ribose-5-phosphate isomerase A from Albidiferax ferrireducens (strain ATCC BAA-621 / DSM 15236 / T118) (Rhodoferax ferrireducens).